The following is a 283-amino-acid chain: 1D-myo-inositol 2-acetamido-2-deoxy-alpha-D-glucopyranoside deacetylase (283 aa).

Zn(2+) contacts are provided by histidine 7, aspartate 10, and histidine 148.

The protein belongs to the MshB deacetylase family. It depends on Zn(2+) as a cofactor.

It catalyses the reaction 1D-myo-inositol 2-acetamido-2-deoxy-alpha-D-glucopyranoside + H2O = 1D-myo-inositol 2-amino-2-deoxy-alpha-D-glucopyranoside + acetate. Functionally, catalyzes the deacetylation of 1D-myo-inositol 2-acetamido-2-deoxy-alpha-D-glucopyranoside (GlcNAc-Ins) in the mycothiol biosynthesis pathway. The chain is 1D-myo-inositol 2-acetamido-2-deoxy-alpha-D-glucopyranoside deacetylase from Gordonia bronchialis (strain ATCC 25592 / DSM 43247 / BCRC 13721 / JCM 3198 / KCTC 3076 / NBRC 16047 / NCTC 10667) (Rhodococcus bronchialis).